The following is a 109-amino-acid chain: Staphostatin B (109 aa).

The binds to staphopain B stretch occupies residues 97–101; it reads IGTSR.

Belongs to the protease inhibitor I57 (SspC) family. As to quaternary structure, forms a stable non-covalent complex with prematurely activated/folded SspB.

The protein resides in the cytoplasm. In terms of biological role, specifically inhibits the cysteine protease staphopain B (SspB) by blocking the active site of the enzyme. Probably required to protect cytoplasmic proteins from being degraded by prematurely activated/folded prostaphopain B. Also involved in growth capacity, viability and bacterial morphology. The sequence is that of Staphostatin B (sspC) from Staphylococcus aureus (strain Mu50 / ATCC 700699).